The chain runs to 392 residues: Sulfate adenylyltransferase (392 aa).

It belongs to the sulfate adenylyltransferase family.

It catalyses the reaction sulfate + ATP + H(+) = adenosine 5'-phosphosulfate + diphosphate. It participates in sulfur metabolism; hydrogen sulfide biosynthesis; sulfite from sulfate: step 1/3. This Trichormus variabilis (strain ATCC 29413 / PCC 7937) (Anabaena variabilis) protein is Sulfate adenylyltransferase.